A 325-amino-acid polypeptide reads, in one-letter code: uncharacterized protein (325 aa).

Disordered regions lie at residues Leu-32–Ile-65 and Gly-99–Gly-152. A Globin domain is found at Leu-153–Tyr-291.

This is an uncharacterized protein from Caenorhabditis elegans.